We begin with the raw amino-acid sequence, 273 residues long: MSYFTIQNEDLPQGFTFRPHDKIYDSLWEMMDDGYFPSTIPLKTTINGVDMPSVGWLEVDEGLYDILIDGLDVLRPTDEEMIVSATGWPLEKNRALILNFFRNLRMDIIGTYTLQRSFITIMSIVLFGDQNPRLRRKKRSRVSLGKMLFDLALRMRSKIRRMKLTEVQVTGQNLVKDLCLLHILDLQKRLVTRGTIAEKRFFTAIEQAPCNYEPKRYGMKKKHMNFMFESDRKNLTVHPTLVNLEEHWITFESARERLLDTTFTKDWPVVGSL.

Belongs to the phlebovirus NS-S protein family. In terms of assembly, interacts with host MAVS; this interaction weakly inhibits the host IFN response.

It is found in the host cytoplasm. Acts as a weak IFN antagonist. This is Non-structural protein NS-S (NSS) from Homo sapiens (Human).